The following is a 430-amino-acid chain: Trigger factor (430 aa).

Residues 157 to 242 enclose the PPIase FKBP-type domain; that stretch reads GDLVALETWS…AVEVSEPVLP (86 aa).

Belongs to the FKBP-type PPIase family. Tig subfamily.

It is found in the cytoplasm. It catalyses the reaction [protein]-peptidylproline (omega=180) = [protein]-peptidylproline (omega=0). Involved in protein export. Acts as a chaperone by maintaining the newly synthesized protein in an open conformation. Functions as a peptidyl-prolyl cis-trans isomerase. This Xanthomonas oryzae pv. oryzae (strain PXO99A) protein is Trigger factor.